Consider the following 84-residue polypeptide: Agaphelin (84 aa).

Positions 1-26 are cleaved as a signal peptide; that stretch reads MKMRVHLLAVSVLLVVLALQTTPAEA. The Kazal-like domain occupies 29 to 82; that stretch reads NSEMATCACQLIYRPVCASNNESYSNECVLKCASETPTGRSIGLHKVKDGNCNG. Cystine bridges form between C35/C60, C37/C56, and C45/C80. Residue N49 is glycosylated (N-linked (GlcNAc...) asparagine).

Interacts with human ELANE.

It is found in the secreted. Functionally, functions as a slow and tight inhibitor of host neutrophil elastase (ELANE). Inhibits host proteinase 3 (PRTN3) and chymotrypsin. Does not inhibit other host proteases involved in coagulation or inflammation, such as cathepsin G (CTSG), trypsin, chymase, matriptase, beta-tryptase, kallikrein, urokinase-type plasminogen activator (PLAU), coagulation factors Xa (F10), XIa (F11), XIIa (F12), plasmin (PLG), thrombin (F2) and tissue-type plasminogen activator (PLAT). Inhibits host neutrophil chemotaxis induced by N-formylmethionine-leucyl-phenylalanine (fMLP) in vitro. Inhibits ELANE-mediated potentiation of platelet aggregation induced by CTSG in the host. Does not affect CTSG- or collagen-induced platelet aggregation. Blocks cleavage of tissue factor pathway inhibitor (TFPI) by ELANE in the host. Inhibits neutrophil-induced coagulation in the host by interfering with neutrophil extracellular traps (NET) formation. Exhibits anti-inflammatory activity. Reduces ischemia-induced activation of MAPK and NF-kappa-B pathways in the host. Decreases CCL2 and IL8 production in IL4- or lipopolysaccharide (LPS)-stimulated host epithelial cells. Reduces caspase-3 (CASP3)-dependent apoptosis in damaged host tissues. This Anopheles gambiae (African malaria mosquito) protein is Agaphelin.